We begin with the raw amino-acid sequence, 407 residues long: Imidazolonepropionase (407 aa).

2 residues coordinate Fe(3+): His-68 and His-70. Positions 68 and 70 each coordinate Zn(2+). Arg-77, Tyr-140, and His-173 together coordinate 4-imidazolone-5-propanoate. Tyr-140 lines the N-formimidoyl-L-glutamate pocket. His-238 provides a ligand contact to Fe(3+). Zn(2+) is bound at residue His-238. Gln-241 contributes to the 4-imidazolone-5-propanoate binding site. Residue Asp-313 participates in Fe(3+) binding. Asp-313 provides a ligand contact to Zn(2+). N-formimidoyl-L-glutamate-binding residues include Asn-315 and Gly-317. Thr-318 serves as a coordination point for 4-imidazolone-5-propanoate.

The protein belongs to the metallo-dependent hydrolases superfamily. HutI family. The cofactor is Zn(2+). Fe(3+) is required as a cofactor.

It localises to the cytoplasm. It carries out the reaction 4-imidazolone-5-propanoate + H2O = N-formimidoyl-L-glutamate. It participates in amino-acid degradation; L-histidine degradation into L-glutamate; N-formimidoyl-L-glutamate from L-histidine: step 3/3. Functionally, catalyzes the hydrolytic cleavage of the carbon-nitrogen bond in imidazolone-5-propanoate to yield N-formimidoyl-L-glutamate. It is the third step in the universal histidine degradation pathway. In Burkholderia pseudomallei (strain 1710b), this protein is Imidazolonepropionase.